A 223-amino-acid polypeptide reads, in one-letter code: Large ribosomal subunit protein uL3 (223 aa).

Belongs to the universal ribosomal protein uL3 family. Part of the 50S ribosomal subunit. Forms a cluster with proteins L14 and L19.

One of the primary rRNA binding proteins, it binds directly near the 3'-end of the 23S rRNA, where it nucleates assembly of the 50S subunit. The sequence is that of Large ribosomal subunit protein uL3 from Cutibacterium acnes (strain DSM 16379 / KPA171202) (Propionibacterium acnes).